A 478-amino-acid polypeptide reads, in one-letter code: Multidrug resistance outer membrane protein MdtQ (478 aa).

The first 21 residues, 1–21, serve as a signal peptide directing secretion; the sequence is MNRDSFYPAIACFPLLLMLAG. Cys22 is lipidated: N-palmitoyl cysteine. Cys22 carries S-diacylglycerol cysteine lipidation.

The protein belongs to the outer membrane factor (OMF) (TC 1.B.17) family.

The protein resides in the cell outer membrane. Could be involved in resistance to puromycin, acriflavine and tetraphenylarsonium chloride. This is Multidrug resistance outer membrane protein MdtQ (mdtQ) from Escherichia coli O6:H1 (strain CFT073 / ATCC 700928 / UPEC).